We begin with the raw amino-acid sequence, 194 residues long: 7-methyl-GTP pyrophosphatase (194 aa).

The active-site Proton acceptor is the aspartate 70.

This sequence belongs to the Maf family. YceF subfamily. Requires a divalent metal cation as cofactor.

The protein resides in the cytoplasm. It carries out the reaction N(7)-methyl-GTP + H2O = N(7)-methyl-GMP + diphosphate + H(+). Its function is as follows. Nucleoside triphosphate pyrophosphatase that hydrolyzes 7-methyl-GTP (m(7)GTP). May have a dual role in cell division arrest and in preventing the incorporation of modified nucleotides into cellular nucleic acids. The chain is 7-methyl-GTP pyrophosphatase from Vibrio vulnificus (strain YJ016).